We begin with the raw amino-acid sequence, 135 residues long: Sex-regulated protein janus-A (135 aa).

Lys37 is a binding site for substrate. The active-site Proton acceptor is His63. A substrate-binding site is contributed by 104–106 (SQG).

The protein belongs to the janus family.

JanA and janB regulate somatic sex differentiation. The chain is Sex-regulated protein janus-A (janA) from Drosophila orena (Fruit fly).